A 427-amino-acid polypeptide reads, in one-letter code: Tegument protein VP16 homolog (427 aa).

The protein belongs to the herpesviridae tegument protein VP16 protein family.

The protein resides in the virion tegument. Its subcellular location is the host nucleus. Its function is as follows. Transcriptional activator of immediate-early (IE) gene products (alpha genes). Acts as a key activator of lytic infection by initiating the lytic program through the assembly of the transcriptional regulatory VP16-induced complex composed of VP16 and two cellular factors, HCFC1 and POU2F1. VP16-induced complex represents a regulatory switch: when it is on, it promotes IE-gene expression and thus lytic infection, and when it is off, it limits IE-gene transcription favoring latent infection. In terms of biological role, may play a role in the aggregation of tegument proteins around nucleocapsids during virus morphogenesis. This is Tegument protein VP16 homolog (MDV061) from Gallus gallus (Chicken).